Here is a 129-residue protein sequence, read N- to C-terminus: Phosphoribosyl-AMP cyclohydrolase (129 aa).

Asp86 provides a ligand contact to Mg(2+). Cys87 contributes to the Zn(2+) binding site. Mg(2+)-binding residues include Asp88 and Asp90. Zn(2+) contacts are provided by Cys104 and Cys111.

This sequence belongs to the PRA-CH family. In terms of assembly, homodimer. Mg(2+) serves as cofactor. It depends on Zn(2+) as a cofactor.

The protein resides in the cytoplasm. The catalysed reaction is 1-(5-phospho-beta-D-ribosyl)-5'-AMP + H2O = 1-(5-phospho-beta-D-ribosyl)-5-[(5-phospho-beta-D-ribosylamino)methylideneamino]imidazole-4-carboxamide. The protein operates within amino-acid biosynthesis; L-histidine biosynthesis; L-histidine from 5-phospho-alpha-D-ribose 1-diphosphate: step 3/9. Functionally, catalyzes the hydrolysis of the adenine ring of phosphoribosyl-AMP. This is Phosphoribosyl-AMP cyclohydrolase from Ignicoccus hospitalis (strain KIN4/I / DSM 18386 / JCM 14125).